The sequence spans 113 residues: MNTVRVTFLLVFVLAVSLGQADKDENRMEMQEKTEQGKSYLDFAENLLLQKLEELEAKLLEEDSEESRNSRQKRCIGEGVPCDENDPRCCSGLICLKPTLHGIWYKSYYCYKK.

The first 21 residues, 1–21 (MNTVRVTFLLVFVLAVSLGQA), serve as a signal peptide directing secretion. A propeptide spanning residues 22–74 (DKDENRMEMQEKTEQGKSYLDFAENLLLQKLEELEAKLLEEDSEESRNSRQKR) is cleaved from the precursor. The tract at residues 61-83 (EEDSEESRNSRQKRCIGEGVPCD) is disordered. Cystine bridges form between cysteine 75–cysteine 90, cysteine 82–cysteine 95, and cysteine 89–cysteine 110.

Belongs to the neurotoxin 14 (magi-1) family. 01 (HNTX-16) subfamily. Expressed by the venom gland.

The protein localises to the secreted. Functionally, probable ion channel inhibitor. In Cyriopagopus hainanus (Chinese bird spider), this protein is U11-theraphotoxin-Hhn1g.